The sequence spans 141 residues: Ribosome-binding factor A (141 aa).

The protein belongs to the RbfA family. In terms of assembly, monomer. Binds 30S ribosomal subunits, but not 50S ribosomal subunits or 70S ribosomes.

The protein resides in the cytoplasm. One of several proteins that assist in the late maturation steps of the functional core of the 30S ribosomal subunit. Associates with free 30S ribosomal subunits (but not with 30S subunits that are part of 70S ribosomes or polysomes). Required for efficient processing of 16S rRNA. May interact with the 5'-terminal helix region of 16S rRNA. The sequence is that of Ribosome-binding factor A from Afipia carboxidovorans (strain ATCC 49405 / DSM 1227 / KCTC 32145 / OM5) (Oligotropha carboxidovorans).